A 103-amino-acid polypeptide reads, in one-letter code: L-rhamnose-binding lectin ELEL-1 (103 aa).

One can recognise an SUEL-type lectin domain in the interval 13 to 102; it reads VCEGSSLTIS…KYLELSYDCS (90 aa). Disulfide bonds link cysteine 14/cysteine 45, cysteine 23/cysteine 101, cysteine 56/cysteine 88, and cysteine 69/cysteine 75.

In terms of assembly, homodimer; disulfide-linked. Post-translationally, not glycosylated.

Rhamnose-binding lectin. Also binds alpha-D-melibiose, alpha-D-lactose, beta-D-lactose, methyl-alpha-D-galactopyranoside, methyl-beta-D--galactopyranoside and D-galactose but not D-arabinose, L-fucose, D-glucose, D-mannose, D-maltose, D-sucrose, N-acetyl-D-galactosamine, N-acetyl-D-glucosamine, N-acetyl-D-mannosamine-D-xylose or by glycoproteins orosomucoid, thyroglobulin, ovomucoid and porcine stomach mucin. Shows cation-independent hemagglutinating activity against rabbit and human erythrocytes. Agglutinates cells of Gram-positive bacterial species S.aureus but not those of Gram-negative E.coli. The polypeptide is L-rhamnose-binding lectin ELEL-1 (Echinometra lucunter (Rock-boring urchin)).